We begin with the raw amino-acid sequence, 193 residues long: Putative 3-methyladenine DNA glycosylase (193 aa).

It belongs to the DNA glycosylase MPG family.

This is Putative 3-methyladenine DNA glycosylase from Francisella tularensis subsp. tularensis (strain FSC 198).